The primary structure comprises 388 residues: AdoMet-dependent heme synthase (388 aa).

Positions 1–12 are enriched in low complexity; it reads MHNANHPHGNGH. The tract at residues 1 to 29 is disordered; it reads MHNANHPHGNGHPAEKKGMGAHSGAMNMP. Residues 34–257 form the Radical SAM core domain; the sequence is DGSPACRLIA…TSMHLKATCA (224 aa). Positions 50, 54, and 57 each coordinate [4Fe-4S] cluster.

It belongs to the radical SAM superfamily. It depends on [4Fe-4S] cluster as a cofactor.

It carries out the reaction Fe-coproporphyrin III + 2 S-adenosyl-L-methionine = heme b + 2 5'-deoxyadenosine + 2 L-methionine + 2 CO2. The protein operates within porphyrin-containing compound metabolism; protoheme biosynthesis. Involved in siroheme-dependent heme b biosynthesis. Catalyzes the conversion of Fe-coproporphyrin III into heme by the oxidative decarboxylation of two propionate side chains. The chain is AdoMet-dependent heme synthase from Oleidesulfovibrio alaskensis (strain ATCC BAA-1058 / DSM 17464 / G20) (Desulfovibrio alaskensis).